The chain runs to 427 residues: Probable G-protein coupled receptor 150 (427 aa).

Residues 1 to 3 (MED) are Extracellular-facing. A helical membrane pass occupies residues 4-24 (PFSLAILNPASNLSVPTQPSW). The Cytoplasmic segment spans residues 25 to 50 (SLNLTSEQGASVPGPHSPPRGPPSHR). Residues 51-71 (IHLVFLGIILVAAVAGNTTVL) form a helical membrane-spanning segment. The Extracellular portion of the chain corresponds to 72–89 (CRLCGGSSGPWPGPKRRK). A helical transmembrane segment spans residues 90 to 110 (MDFLLVQLAAADLYASGGTAL). The Cytoplasmic segment spans residues 111–170 (SQLAWELLGDPRPALGDLACRLSHLLQASGRGASAHLVALIALERQLAVRIPQGPQLPAR). A helical membrane pass occupies residues 171–191 (ALAALSWLLALLLALPPTFVV). Residues 192–230 (RWDAPPSSTANAWPGKHCCRGIFAPLPRWHLQVYALYEA) lie on the Extracellular side of the membrane. Residues 231-251 (IVGFAAPVALLGFSCGHLLCV) form a helical membrane-spanning segment. At 252 to 286 (WWQRGSQAPVARMPWSPSMARASLPSALPQAKVQS) the chain is on the cytoplasmic side. Residues 287–307 (LKMSLALALLFVGCDLPYFAA) traverse the membrane as a helical segment. Over 308 to 327 (RLAAAWSSKPAGDWERESLV) the chain is Extracellular. The chain crosses the membrane as a helical span at residues 328 to 348 (AAMRVLEVANSAINPLIYLFF). Over 349-427 (QAGDCRLWRR…PPPCSCESAF (79 aa)) the chain is Cytoplasmic. The segment at 402–427 (EERNQGCLRPPPPRPRPPPCSCESAF) is disordered. Residues 410–421 (RPPPPRPRPPPC) are compositionally biased toward pro residues.

This sequence belongs to the G-protein coupled receptor 1 family.

It localises to the cell membrane. In terms of biological role, orphan receptor. The polypeptide is Probable G-protein coupled receptor 150 (Gpr150) (Mus musculus (Mouse)).